The primary structure comprises 1303 residues: Zinc finger CCCH domain-containing protein 4 (1303 aa).

The segment covering M1 to S33 has biased composition (pro residues). The segment at M1–S388 is disordered. Acidic residues predominate over residues D53–Q73. 2 positions are modified to phosphothreonine: T72 and T75. Phosphoserine occurs at positions 76, 92, and 94. Positions E80–S99 are enriched in basic and acidic residues. A coiled-coil region spans residues D95–R128. The span at H100–A130 shows a compositional bias: basic residues. The segment covering D135–D144 has biased composition (acidic residues). The residue at position 155 (Y155) is a Phosphotyrosine. Residues E194–D218 are compositionally biased toward acidic residues. The span at D219 to S235 shows a compositional bias: basic and acidic residues. A compositionally biased stretch (basic residues) spans R238 to G251. Gly residues predominate over residues S252 to G274. The segment covering P278 to D304 has biased composition (acidic residues). Residues E305–G321 show a composition bias toward basic and acidic residues. The span at G323–G346 shows a compositional bias: basic residues. The span at N358–G369 shows a compositional bias: acidic residues. Basic and acidic residues predominate over residues R377–S388. C3H1-type zinc fingers lie at residues K390–E417, P419–F446, and P447–L470. The span at A486–V496 shows a compositional bias: acidic residues. Positions A486 to Q571 are disordered. 2 stretches are compositionally biased toward pro residues: residues L507–P529 and G539–P558. R601 is subject to Asymmetric dimethylarginine. The span at P605–M624 shows a compositional bias: pro residues. 3 disordered regions span residues P605–M685, G710–Q955, and P996–K1288. A compositionally biased stretch (basic and acidic residues) spans P630–A650. A compositionally biased stretch (pro residues) spans N659 to P673. Composition is skewed to basic and acidic residues over residues D717–E739 and E782–R795. Residues R767 to G800 adopt a coiled-coil conformation. 2 positions are modified to phosphoserine: S807 and S808. A compositionally biased stretch (polar residues) spans S815–G843. Basic and acidic residues predominate over residues A860–E875. S904, S907, and S908 each carry phosphoserine. Positions S904–S918 are enriched in low complexity. Polar residues-rich tracts occupy residues G1028–A1038 and V1053–P1062. The span at K1067–K1084 shows a compositional bias: basic and acidic residues. Low complexity predominate over residues P1097 to S1110. Position 1104 is a phosphoserine (S1104). T1106 carries the phosphothreonine modification. Phosphoserine is present on residues S1108, S1110, and S1114. T1118 carries the phosphothreonine modification. Positions G1129–Q1139 are enriched in gly residues. Residues K1224–A1234 are compositionally biased toward low complexity. A compositionally biased stretch (pro residues) spans T1235–P1245. Polar residues predominate over residues V1259–G1268. Phosphoserine is present on residues S1269 and S1275.

The protein belongs to the suppressor of sable family. Interacts with WDR82.

The protein localises to the chromosome. RNA-binding protein that suppresses transcription of long non-coding RNAs (lncRNAs). LncRNAs are defined as transcripts more than 200 nucleotides that are not translated into protein. Together with WDR82, part of a transcription termination checkpoint that promotes transcription termination of lncRNAs and their subsequent degradation by the exosome. The transcription termination checkpoint is activated by the inefficiently spliced first exon of lncRNAs. The chain is Zinc finger CCCH domain-containing protein 4 from Homo sapiens (Human).